The primary structure comprises 133 residues: Holo-[acyl-carrier-protein] synthase (133 aa).

Mg(2+)-binding residues include D8 and E56.

It belongs to the P-Pant transferase superfamily. AcpS family. Mg(2+) is required as a cofactor.

Its subcellular location is the cytoplasm. The catalysed reaction is apo-[ACP] + CoA = holo-[ACP] + adenosine 3',5'-bisphosphate + H(+). Functionally, transfers the 4'-phosphopantetheine moiety from coenzyme A to a Ser of acyl-carrier-protein. The polypeptide is Holo-[acyl-carrier-protein] synthase (Clostridium perfringens (strain ATCC 13124 / DSM 756 / JCM 1290 / NCIMB 6125 / NCTC 8237 / Type A)).